We begin with the raw amino-acid sequence, 466 residues long: Asparagine--tRNA ligase (466 aa).

It belongs to the class-II aminoacyl-tRNA synthetase family. In terms of assembly, homodimer.

The protein localises to the cytoplasm. It catalyses the reaction tRNA(Asn) + L-asparagine + ATP = L-asparaginyl-tRNA(Asn) + AMP + diphosphate + H(+). The protein is Asparagine--tRNA ligase of Vibrio vulnificus (strain YJ016).